A 234-amino-acid chain; its full sequence is Endonuclease V (234 aa).

Asp36 and Asp104 together coordinate Mg(2+).

The protein belongs to the endonuclease V family. Mg(2+) is required as a cofactor.

The protein localises to the cytoplasm. It catalyses the reaction Endonucleolytic cleavage at apurinic or apyrimidinic sites to products with a 5'-phosphate.. Functionally, DNA repair enzyme involved in the repair of deaminated bases. Selectively cleaves double-stranded DNA at the second phosphodiester bond 3' to a deoxyinosine leaving behind the intact lesion on the nicked DNA. This is Endonuclease V from Yersinia pseudotuberculosis serotype O:1b (strain IP 31758).